The following is a 530-amino-acid chain: MQLTVWTYEGPPHVGAMRVATGMEGLHYVLHAPQGDTYADLLFTMIERRDRRPPVTYTTFAARDLGGDTAELFKTAVQNAYERFRPQAMIVGASCTGSLIQDDPGGLAKGMGLPVPVIAIDLPAYQRKENWGAAETFYQLVRALAGPSAPPPGSKRPERAPGVRPKCNILGPTALGFRHRDDVIEITALLGKLGIDVNVTAPMGATPADLTRLGEADFNVVLYPEIASQAASWLHRIFHQPFTKTIPIGVSATREFIEEVAALAGVDAAPVLKANSSRLTWFSHSVDSTYLTGKRVFIFGDATHVVAAARIASDEIGFKVVGIGTYSREFGREIREAAKLYDVEPLITDDYLEVEAHIAELQVELVLGTQMERHISKRLGVPCAVISAPVHIQDYPARYAPQMGFEGANVIFDTWVHPLMMGLEEHLLAMFKDDFEFKDGAVPSHLGVGHSAPAVQTASSEPQPSAIETPSAAATETAAVWAADAEKELRKIPFFVRGKARRNTERFANENGVATITVETLYDAKAHFSR.

Position 36 (D36) interacts with [4Fe-4S] cluster. The active-site Proton donor is D287. 422-423 (GL) contacts substrate. The disordered stretch occupies residues 453–472 (PAVQTASSEPQPSAIETPSA). Over residues 454–463 (AVQTASSEPQ) the composition is skewed to polar residues.

Belongs to the ChlB/BchB/BchZ family. Protochlorophyllide reductase is composed of three subunits; BchL, BchN and BchB. Forms a heterotetramer of two BchB and two BchN subunits. [4Fe-4S] cluster serves as cofactor.

It catalyses the reaction chlorophyllide a + oxidized 2[4Fe-4S]-[ferredoxin] + 2 ADP + 2 phosphate = protochlorophyllide a + reduced 2[4Fe-4S]-[ferredoxin] + 2 ATP + 2 H2O. It participates in porphyrin-containing compound metabolism; bacteriochlorophyll biosynthesis (light-independent). Component of the dark-operative protochlorophyllide reductase (DPOR) that uses Mg-ATP and reduced ferredoxin to reduce ring D of protochlorophyllide (Pchlide) to form chlorophyllide a (Chlide). This reaction is light-independent. The NB-protein (BchN-BchB) is the catalytic component of the complex. In Rhodopseudomonas palustris (strain BisB18), this protein is Light-independent protochlorophyllide reductase subunit B.